Reading from the N-terminus, the 335-residue chain is Holliday junction branch migration complex subunit RuvB (335 aa).

The large ATPase domain (RuvB-L) stretch occupies residues 1 to 181 (MERIIEIEKM…FGMNFWMQFY (181 aa)). Residues Leu-20, Arg-21, Gly-62, Lys-65, Thr-66, Thr-67, 128–130 (EDF), Arg-171, Tyr-181, and Arg-218 each bind ATP. Thr-66 is a binding site for Mg(2+). Positions 182–252 (NIEELSQIIT…QARYALHELG (71 aa)) are small ATPAse domain (RuvB-S). A head domain (RuvB-H) region spans residues 255–335 (DHGFDDLDLR…LPFEPNATLF (81 aa)). 2 residues coordinate DNA: Arg-309 and Arg-314.

The protein belongs to the RuvB family. Homohexamer. Forms an RuvA(8)-RuvB(12)-Holliday junction (HJ) complex. HJ DNA is sandwiched between 2 RuvA tetramers; dsDNA enters through RuvA and exits via RuvB. An RuvB hexamer assembles on each DNA strand where it exits the tetramer. Each RuvB hexamer is contacted by two RuvA subunits (via domain III) on 2 adjacent RuvB subunits; this complex drives branch migration. In the full resolvosome a probable DNA-RuvA(4)-RuvB(12)-RuvC(2) complex forms which resolves the HJ.

It localises to the cytoplasm. The catalysed reaction is ATP + H2O = ADP + phosphate + H(+). The RuvA-RuvB-RuvC complex processes Holliday junction (HJ) DNA during genetic recombination and DNA repair, while the RuvA-RuvB complex plays an important role in the rescue of blocked DNA replication forks via replication fork reversal (RFR). RuvA specifically binds to HJ cruciform DNA, conferring on it an open structure. The RuvB hexamer acts as an ATP-dependent pump, pulling dsDNA into and through the RuvAB complex. RuvB forms 2 homohexamers on either side of HJ DNA bound by 1 or 2 RuvA tetramers; 4 subunits per hexamer contact DNA at a time. Coordinated motions by a converter formed by DNA-disengaged RuvB subunits stimulates ATP hydrolysis and nucleotide exchange. Immobilization of the converter enables RuvB to convert the ATP-contained energy into a lever motion, pulling 2 nucleotides of DNA out of the RuvA tetramer per ATP hydrolyzed, thus driving DNA branch migration. The RuvB motors rotate together with the DNA substrate, which together with the progressing nucleotide cycle form the mechanistic basis for DNA recombination by continuous HJ branch migration. Branch migration allows RuvC to scan DNA until it finds its consensus sequence, where it cleaves and resolves cruciform DNA. This Wolinella succinogenes (strain ATCC 29543 / DSM 1740 / CCUG 13145 / JCM 31913 / LMG 7466 / NCTC 11488 / FDC 602W) (Vibrio succinogenes) protein is Holliday junction branch migration complex subunit RuvB.